A 75-amino-acid chain; its full sequence is Putative membrane protein insertion efficiency factor (75 aa).

Belongs to the UPF0161 family.

The protein localises to the cell membrane. Could be involved in insertion of integral membrane proteins into the membrane. This Halalkalibacterium halodurans (strain ATCC BAA-125 / DSM 18197 / FERM 7344 / JCM 9153 / C-125) (Bacillus halodurans) protein is Putative membrane protein insertion efficiency factor.